The primary structure comprises 1517 residues: DNA-directed RNA polymerase subunit beta' (1517 aa).

Positions 71, 73, 86, and 89 each coordinate Zn(2+). Mg(2+) contacts are provided by Asp482, Asp484, and Asp486. Zn(2+) is bound by residues Cys812, Cys886, Cys893, and Cys896.

Belongs to the RNA polymerase beta' chain family. As to quaternary structure, the RNAP catalytic core consists of 2 alpha, 1 beta, 1 beta' and 1 omega subunit. When a sigma factor is associated with the core the holoenzyme is formed, which can initiate transcription. Mg(2+) serves as cofactor. The cofactor is Zn(2+).

It carries out the reaction RNA(n) + a ribonucleoside 5'-triphosphate = RNA(n+1) + diphosphate. In terms of biological role, DNA-dependent RNA polymerase catalyzes the transcription of DNA into RNA using the four ribonucleoside triphosphates as substrates. The polypeptide is DNA-directed RNA polymerase subunit beta' (Campylobacter jejuni (strain RM1221)).